The sequence spans 172 residues: uncharacterized protein (172 aa).

At 1-101 the chain is on the lumenal side; that stretch reads MEHVSKRSIG…RYDINTRPLV (101 aa). The chain crosses the membrane as a helical span at residues 102–122; sequence VVLAISIVFFGCLLVLKDIII. Over 123–145 the chain is Cytoplasmic; that stretch reads QSSENILSVSKWKIIGASFMGTP. A helical transmembrane segment spans residues 146–164; that stretch reads YTGLLTGLVGPLLSPFSAV. Residues 165–172 lie on the Lumenal side of the membrane; it reads SSWLSFIF.

It localises to the endoplasmic reticulum membrane. This is an uncharacterized protein from Saccharomyces cerevisiae (strain ATCC 204508 / S288c) (Baker's yeast).